We begin with the raw amino-acid sequence, 304 residues long: Ribosomal RNA small subunit methyltransferase H (304 aa).

S-adenosyl-L-methionine contacts are provided by residues 50–52 (GGH), D69, F97, D113, and Q120.

The protein belongs to the methyltransferase superfamily. RsmH family.

Its subcellular location is the cytoplasm. The enzyme catalyses cytidine(1402) in 16S rRNA + S-adenosyl-L-methionine = N(4)-methylcytidine(1402) in 16S rRNA + S-adenosyl-L-homocysteine + H(+). Specifically methylates the N4 position of cytidine in position 1402 (C1402) of 16S rRNA. The polypeptide is Ribosomal RNA small subunit methyltransferase H (Rippkaea orientalis (strain PCC 8801 / RF-1) (Cyanothece sp. (strain PCC 8801))).